The chain runs to 78 residues: DNA-directed RNA polymerase subunit Rpo5 (78 aa).

This sequence belongs to the archaeal Rpo5/eukaryotic RPB5 RNA polymerase subunit family. As to quaternary structure, part of the RNA polymerase complex.

The protein resides in the cytoplasm. The catalysed reaction is RNA(n) + a ribonucleoside 5'-triphosphate = RNA(n+1) + diphosphate. DNA-dependent RNA polymerase (RNAP) catalyzes the transcription of DNA into RNA using the four ribonucleoside triphosphates as substrates. This chain is DNA-directed RNA polymerase subunit Rpo5, found in Methanococcus maripaludis (strain C6 / ATCC BAA-1332).